Reading from the N-terminus, the 250-residue chain is Triosephosphate isomerase (250 aa).

Position 9 to 11 (9 to 11) interacts with substrate; it reads NWK. H95 serves as the catalytic Electrophile. Catalysis depends on E167, which acts as the Proton acceptor. Substrate-binding positions include G173, S213, and 234–235; that span reads GG.

This sequence belongs to the triosephosphate isomerase family. In terms of assembly, homodimer.

Its subcellular location is the cytoplasm. It carries out the reaction D-glyceraldehyde 3-phosphate = dihydroxyacetone phosphate. It functions in the pathway carbohydrate biosynthesis; gluconeogenesis. Its pathway is carbohydrate degradation; glycolysis; D-glyceraldehyde 3-phosphate from glycerone phosphate: step 1/1. Functionally, involved in the gluconeogenesis. Catalyzes stereospecifically the conversion of dihydroxyacetone phosphate (DHAP) to D-glyceraldehyde-3-phosphate (G3P). This chain is Triosephosphate isomerase, found in Herpetosiphon aurantiacus (strain ATCC 23779 / DSM 785 / 114-95).